We begin with the raw amino-acid sequence, 133 residues long: Large ribosomal subunit protein eL14 (133 aa).

Belongs to the eukaryotic ribosomal protein eL14 family.

In Pisum sativum (Garden pea), this protein is Large ribosomal subunit protein eL14.